The sequence spans 264 residues: Proliferating cell nuclear antigen (264 aa).

Residues 61–80 mediate DNA binding; the sequence is RCDRNLAMGINMTSMAKIMK.

It belongs to the PCNA family. Homotrimer. Forms a complex with activator 1 heteropentamer in the presence of ATP.

The protein localises to the nucleus. In terms of biological role, this protein is an auxiliary protein of DNA polymerase delta and is involved in the control of eukaryotic DNA replication by increasing the polymerase's processibility during elongation of the leading strand. The chain is Proliferating cell nuclear antigen (PCNA) from Styela clava (Sea squirt).